We begin with the raw amino-acid sequence, 581 residues long: NADH-quinone oxidoreductase subunit C/D (581 aa).

The segment at 1–172 (MSAFELVTEL…PLFNMTASLF (172 aa)) is NADH dehydrogenase I subunit C. The NADH dehydrogenase I subunit D stretch occupies residues 196 to 581 (ELMILNYGPH…IDYVMSDVDR (386 aa)).

This sequence in the N-terminal section; belongs to the complex I 30 kDa subunit family. It in the C-terminal section; belongs to the complex I 49 kDa subunit family. In terms of assembly, NDH-1 is composed of 13 different subunits. Subunits NuoB, CD, E, F, and G constitute the peripheral sector of the complex.

The protein localises to the cell inner membrane. It carries out the reaction a quinone + NADH + 5 H(+)(in) = a quinol + NAD(+) + 4 H(+)(out). In terms of biological role, NDH-1 shuttles electrons from NADH, via FMN and iron-sulfur (Fe-S) centers, to quinones in the respiratory chain. The immediate electron acceptor for the enzyme in this species is believed to be ubiquinone. Couples the redox reaction to proton translocation (for every two electrons transferred, four hydrogen ions are translocated across the cytoplasmic membrane), and thus conserves the redox energy in a proton gradient. This chain is NADH-quinone oxidoreductase subunit C/D, found in Rhodopseudomonas palustris (strain ATCC BAA-98 / CGA009).